We begin with the raw amino-acid sequence, 235 residues long: UPF0758 protein A1S_2918 (235 aa).

The segment at 1–20 (MNTSIKNWPEQERPRERLLQ) is disordered. Positions 9 to 18 (PEQERPRERL) are enriched in basic and acidic residues. The MPN domain maps to 105-227 (SLHSSHLVLD…SFSFAEQQLL (123 aa)). His-176, His-178, and Asp-189 together coordinate Zn(2+). Residues 176–189 (HNHPFGSPQPSPED) carry the JAMM motif motif.

Belongs to the UPF0758 family.

The protein is UPF0758 protein A1S_2918 of Acinetobacter baumannii (strain ATCC 17978 / DSM 105126 / CIP 53.77 / LMG 1025 / NCDC KC755 / 5377).